A 209-amino-acid chain; its full sequence is Chromophore lyase CpcT/CpeT 1 (209 aa).

This sequence belongs to the CpcT/CpeT biliprotein lyase family.

Covalently attaches a chromophore to Cys residue(s) of phycobiliproteins. The protein is Chromophore lyase CpcT/CpeT 1 of Trichodesmium erythraeum (strain IMS101).